The primary structure comprises 1273 residues: Inverted formin-2 (1273 aa).

5 disordered regions span residues M1–L30, G346–P387, L427–G559, N960–K999, and K1021–Q1273. Position 2 is an N-acetylserine (S2). Residues S2–Q330 enclose the GBD/FH3 domain. S351 is subject to Phosphoserine. Over residues S359–V382 the composition is skewed to low complexity. In terms of domain architecture, FH1 spans P421–S564. Composition is skewed to pro residues over residues V433 to S516 and Q524 to P558. The FH2 domain maps to H589–E979. Residues E907–R984 are a coiled coil. Residues D1007–T1022 form the WH2 domain. Residues A1047–P1059 show a composition bias toward polar residues. Basic and acidic residues predominate over residues S1088–S1101. Phosphoserine occurs at positions 1172 and 1174. Over residues G1195–A1204 the composition is skewed to acidic residues. The residue at position 1203 (T1203) is a Phosphothreonine. Phosphoserine is present on residues S1216 and S1218. T1223 and T1230 each carry phosphothreonine. The segment covering T1242–S1251 has biased composition (basic residues).

Belongs to the formin homology family. In terms of assembly, interacts with profilin and actin at the FH1 and FH2 domains respectively. Interacts with DAAM2.

It is found in the cytoplasm. The protein resides in the perinuclear region. With respect to regulation, phosphate inhibits both the depolymerization and severing activities. In terms of biological role, severs actin filaments and accelerates their polymerization and depolymerization. The protein is Inverted formin-2 (Inf2) of Mus musculus (Mouse).